Here is a 794-residue protein sequence, read N- to C-terminus: Protein sel-1 homolog 1 (794 aa).

The N-terminal stretch at 1–21 (MQVRVRLLLLLCAVLLGSAAA) is a signal peptide. Residues 22–737 (SSDEETNQDE…DLFTQLDMDQ (716 aa)) are interaction with ERLEC1, OS9 and SYVN1. The Lumenal segment spans residues 22–738 (SSDEETNQDE…LFTQLDMDQL (717 aa)). Acidic residues predominate over residues 23–32 (SDEETNQDES). Disordered stretches follow at residues 23–46 (SDEE…GSVK) and 73–105 (QDEE…KTYE). The 49-residue stretch at 122 to 170 (AHGEPCHFPFLFLDKEYDECTSDGREDGRLWCATTYDYKTDEKWGFCET) folds into the Fibronectin type-II domain. Cystine bridges form between Cys127/Cys153 and Cys141/Cys168. Sel1-like repeat units follow at residues 183 to 218 (AEAI…GMNH), 219 to 254 (TKAL…EEGS), 255 to 290 (PKGQ…LGGN), 291 to 326 (LIAH…NHVA), 373 to 409 (VQAQ…NAGN), 410 to 446 (SHAM…DMGN), 447 to 482 (PVGQ…EQGW), 483 to 518 (VDGQ…QGGH), and 519 to 554 (ILAF…ERGR). N-linked (GlcNAc...) asparagine glycans are attached at residues Asn195 and Asn217. Asn272 carries N-linked (GlcNAc...) asparagine glycosylation. Positions 352-537 (NSGMLEEDLI…MHASGTGVMR (186 aa)) are important for homodimerization and oligomerization. N-linked (GlcNAc...) asparagine glycosylation is present at Asn431. N-linked (GlcNAc...) asparagine glycosylation occurs at Asn608. 2 Sel1-like repeats span residues 627 to 662 (TVAR…EQQH) and 664 to 699 (AQAM…EASP). An interaction with SYVN1 region spans residues 643 to 723 (TDVDYETAFI…VVYFLQYIRE (81 aa)). Residues 738–794 (LLGPEWDLYLMTIIALLLGTVIAYRQRQHQDIPVPRPPGPRPAPPQQEGPPEQQPPQ) form a mediates retention in the endoplasmic reticulum region. The chain crosses the membrane as a helical span at residues 739-759 (LGPEWDLYLMTIIALLLGTVI). Topologically, residues 760–794 (AYRQRQHQDIPVPRPPGPRPAPPQQEGPPEQQPPQ) are cytoplasmic. Residues 767 to 794 (QDIPVPRPPGPRPAPPQQEGPPEQQPPQ) are disordered. The segment covering 771-794 (VPRPPGPRPAPPQQEGPPEQQPPQ) has biased composition (pro residues).

The protein belongs to the sel-1 family. Homodimer and homooligomer. May form a complex with ERLEC1, HSPA5, OS9, and SYVN1. Interacts with FOXRED2 and EDEM1. Interacts with LPL and LMF1; may stabilize the complex formed by LPL and LMF1 and thereby promote the export of LPL dimers. Component of the HRD1 complex, which comprises at least SYNV1/HRD1, DERL1/2, FAM8A1, HERPUD1/HERP, OS9, SEL1L and UBE2J1. SYNV1 assembles with SEL1L and FAM8A1 through its transmembrane domains, but interaction with its cytoplasmic domain is required to confer stability to FAM8A1 and enhance recruitment of HERPUD1. The interaction with SYNV1/HRD1 is direct. Post-translationally, N-glycosylated.

It localises to the endoplasmic reticulum membrane. Its function is as follows. Plays a role in the endoplasmic reticulum quality control (ERQC) system also called ER-associated degradation (ERAD) involved in ubiquitin-dependent degradation of misfolded endoplasmic reticulum proteins. Enhances SYVN1 stability. Plays a role in LPL maturation and secretion. Required for normal differentiation of the pancreas epithelium, and for normal exocrine function and survival of pancreatic cells. May play a role in Notch signaling. The sequence is that of Protein sel-1 homolog 1 (Sel1l) from Rattus norvegicus (Rat).